An 877-amino-acid chain; its full sequence is GPI ethanolamine phosphate transferase 2 (877 aa).

Asparagine 190 and asparagine 368 each carry an N-linked (GlcNAc...) asparagine glycan. The next 5 membrane-spanning stretches (helical) occupy residues 409-429 (VDIY…FGLF), 443-463 (YNWY…ASSL), 464-484 (IEEE…ALYF), 528-548 (VDLL…LIYS), and 570-590 (DFGS…SFSF). Asparagine 611 is a glycosylation site (N-linked (GlcNAc...) asparagine). Transmembrane regions (helical) follow at residues 634–654 (IHLS…RIVL), 683–703 (EIVP…KLLA), 716–736 (LMII…FSMG), 758–778 (VFLV…FWSL), 817–837 (LAGF…CFNL), and 854–876 (FASW…ILAL).

Belongs to the PIGG/PIGN/PIGO family. PIGG subfamily.

Its subcellular location is the endoplasmic reticulum membrane. It functions in the pathway glycolipid biosynthesis; glycosylphosphatidylinositol-anchor biosynthesis. Its function is as follows. Ethanolamine phosphate transferase involved in glycosylphosphatidylinositol-anchor biosynthesis. Transfers ethanolamine phosphate to the GPI second mannose. This is GPI ethanolamine phosphate transferase 2 (LAS21) from Debaryomyces hansenii (strain ATCC 36239 / CBS 767 / BCRC 21394 / JCM 1990 / NBRC 0083 / IGC 2968) (Yeast).